Reading from the N-terminus, the 434-residue chain is Perilipin-3 (434 aa).

The disordered stretch occupies residues 1–22 (MSADGAEADGSTQVTVEEPVQQ). N-acetylserine is present on Ser2. Ser31 carries the post-translational modification Phosphoserine. Lys65 is modified (N6-acetyllysine). Ser91 is modified (phosphoserine). Lys122 participates in a covalent cross-link: Glycyl lysine isopeptide (Lys-Gly) (interchain with G-Cter in SUMO1). Residues Ser130 and Ser148 each carry the phosphoserine modification. A Phosphothreonine modification is found at Thr170. Phosphoserine is present on residues Ser175 and Ser179. Thr216 is modified (phosphothreonine). 2 positions are modified to phosphoserine: Ser217 and Ser241. A Phosphotyrosine modification is found at Tyr251. 2 coiled-coil regions span residues 252 to 277 (EHSLGKLRATKQRAQEALLQLSQVLS) and 353 to 377 (TNVKDQVQQARRQVEDLQATFSSIH).

This sequence belongs to the perilipin family. In terms of assembly, homooligomer. Interacts with M6PR (via the cytoplasmic domain). Interacts with IGF2R (via the cytoplasmic domain). As to quaternary structure, may exist as a homodimer. Phosphorylation at Tyr-251 by isoform 1 of CHKA (CHKalpha2) promotes dissociation from lipid droplets: dissociation is followed by recruitment of autophagosome machinery to lipid droplets and subsequent lipid droplet lipolysis.

The protein resides in the lipid droplet. Its subcellular location is the endosome membrane. It localises to the cytoplasm. In terms of biological role, structural component of lipid droplets, which is required for the formation and maintenance of lipid storage droplets. Required for the transport of mannose 6-phosphate receptors (MPR) from endosomes to the trans-Golgi network. This is Perilipin-3 (PLIN3) from Homo sapiens (Human).